The primary structure comprises 476 residues: Nuclear envelope morphology protein 1 (476 aa).

Positions 47–74 are disordered; sequence RRRSSYSASSLSSLSSKPTEKEVPTRNE. Residues 51–62 show a composition bias toward low complexity; sequence SYSASSLSSLSS. The span at 64-74 shows a compositional bias: basic and acidic residues; the sequence is PTEKEVPTRNE. Residues 123-139 traverse the membrane as a helical segment; the sequence is FFWGLCRFVFFPVLLSY. Disordered stretches follow at residues 164–190 and 232–256; these read SSHQ…SNGN and GKAN…PAND. Polar residues predominate over residues 234 to 256; sequence ANSNRSGHSHQPQSTQFSPPAND. 4 N-linked (GlcNAc...) asparagine glycosylation sites follow: Asn237, Asn257, Asn284, and Asn356. Residues 299–460 enclose the FCP1 homology domain; that stretch reads SKLPRKTLVL…LNLLSFLHAL (162 aa).

It belongs to the Dullard family. Component of the nem1-spo7 complex.

The protein localises to the endoplasmic reticulum membrane. Its subcellular location is the nucleus membrane. It catalyses the reaction O-phospho-L-seryl-[protein] + H2O = L-seryl-[protein] + phosphate. The enzyme catalyses O-phospho-L-threonyl-[protein] + H2O = L-threonyl-[protein] + phosphate. Functionally, catalytic component of the nem1-spo7 complex which acts as a phosphatase and may be required for proper nuclear membrane morphology. In Schizosaccharomyces pombe (strain 972 / ATCC 24843) (Fission yeast), this protein is Nuclear envelope morphology protein 1 (nem1).